A 178-amino-acid chain; its full sequence is Fatty-acid and retinol-binding protein 1 (178 aa).

Residues 1 to 16 (MYHQLILMALIGVIMA) form the signal peptide. N-linked (GlcNAc...) asparagine glycans are attached at residues Asn44 and Asn75. 2 coiled-coil regions span residues 67-89 (DAAL…ELRN) and 122-154 (QKLD…LKAT). Residue Asn157 is glycosylated (N-linked (GlcNAc...) asparagine).

Belongs to the fatty-acid and retinol-binding protein (FARBP) family. Post-translationally, N-glycosylated.

It is found in the secreted. Binds retinol and different fatty acids. The sequence is that of Fatty-acid and retinol-binding protein 1 from Onchocerca ochengi (Filarial nematode worm).